A 272-amino-acid chain; its full sequence is uncharacterized protein (272 aa).

This is an uncharacterized protein from Saccharomyces cerevisiae (strain ATCC 204508 / S288c) (Baker's yeast).